The sequence spans 101 residues: Small ribosomal subunit protein uS14 (101 aa).

This sequence belongs to the universal ribosomal protein uS14 family. In terms of assembly, part of the 30S ribosomal subunit. Contacts proteins S3 and S10.

Functionally, binds 16S rRNA, required for the assembly of 30S particles and may also be responsible for determining the conformation of the 16S rRNA at the A site. The polypeptide is Small ribosomal subunit protein uS14 (Stutzerimonas stutzeri (strain A1501) (Pseudomonas stutzeri)).